Here is a 281-residue protein sequence, read N- to C-terminus: Glyoxalase 1 (281 aa).

VOC domains lie at 4–127 (RALH…IGKA) and 132–251 (KVLR…FVGD).

It belongs to the glyoxalase I family. Expressed in the following tissues in both larvae and adults: pharynx, pharyngeal-intestinal valve, intestine, anal sphincter, vulval muscle, seam cells and the nervous system.

Functionally, thought to act as a glyoxalase. May remove methylglyoxal from mitochondrial proteins. Has roles in reducing oxidative stress and increasing lifespan. This is Glyoxalase 1 (glod-4) from Caenorhabditis elegans.